Consider the following 248-residue polypeptide: Coenzyme F420:L-glutamate ligase (248 aa).

GTP-binding positions include 15–18 (IPLI), 45–46 (ET), and Lys50. Asp115 is an a divalent metal cation binding site. A GTP-binding site is contributed by Asn118. A divalent metal cation-binding residues include Asp155, Ser156, and Gln213. Residue 211 to 218 (MGQSNEGI) participates in GTP binding.

It belongs to the CofE family. In terms of assembly, homodimer. It depends on Mg(2+) as a cofactor. The cofactor is Mn(2+). Requires K(+) as cofactor.

The enzyme catalyses oxidized coenzyme F420-0 + GTP + L-glutamate = oxidized coenzyme F420-1 + GDP + phosphate + H(+). The catalysed reaction is oxidized coenzyme F420-1 + GTP + L-glutamate = oxidized coenzyme F420-2 + GDP + phosphate + H(+). It participates in cofactor biosynthesis; coenzyme F420 biosynthesis. Its function is as follows. Catalyzes the GTP-dependent successive addition of two or more gamma-linked L-glutamates to the L-lactyl phosphodiester of 7,8-didemethyl-8-hydroxy-5-deazariboflavin (F420-0) to form coenzyme F420-0-glutamyl-glutamate (F420-2) or polyglutamated F420 derivatives. This is Coenzyme F420:L-glutamate ligase from Methanococcus maripaludis (strain DSM 14266 / JCM 13030 / NBRC 101832 / S2 / LL).